Here is a 267-residue protein sequence, read N- to C-terminus: Undecaprenyl-diphosphatase (267 aa).

Helical transmembrane passes span 1 to 21 (MPLL…FLPV), 40 to 60 (GQAI…LFFW), 85 to 105 (LALG…FLYF), 112 to 132 (LRSV…LYIA), 188 to 208 (IAML…GTEV), 219 to 239 (DMGI…ALMM), and 245 to 265 (VSFT…LFIA).

The protein belongs to the UppP family.

Its subcellular location is the cell inner membrane. It catalyses the reaction di-trans,octa-cis-undecaprenyl diphosphate + H2O = di-trans,octa-cis-undecaprenyl phosphate + phosphate + H(+). In terms of biological role, catalyzes the dephosphorylation of undecaprenyl diphosphate (UPP). Confers resistance to bacitracin. In Ruegeria sp. (strain TM1040) (Silicibacter sp.), this protein is Undecaprenyl-diphosphatase.